The chain runs to 308 residues: Putative mitochondrial transporter UCP3 (308 aa).

Over 1–10 (MVGLQPSEVP) the chain is Mitochondrial intermembrane. The chain crosses the membrane as a helical span at residues 11 to 32 (PTTVVKFLGAGTAACFADLLTF). Solcar repeat units lie at residues 11 to 102 (PTTV…VKQF), 111 to 202 (SSVA…IKEK), and 211 to 296 (DNFP…LKRA). The Mitochondrial matrix segment spans residues 33–73 (PLDTAKVRLQIQGENPGVQSVQYRGVLGTILTMVRTEGPRS). Residues 74–96 (PYSGLVAGLHRQMSFASIRIGLY) traverse the membrane as a helical segment. Topologically, residues 97–116 (DSVKQFYTPKGTDHSSVAIR) are mitochondrial intermembrane. The helical transmembrane segment at 117 to 133 (ILAGCTTGAMAVTCAQP) threads the bilayer. The Mitochondrial matrix portion of the chain corresponds to 134 to 179 (TDVVKVRFQAMIRLGTGGERKYRGTMDAYRTIAREEGVRGLWKGTW). A helical transmembrane segment spans residues 180–196 (PNITRNAIVNCAEMVTY). At 197 to 213 (DIIKEKLLDSHLFTDNF) the chain is on the mitochondrial intermembrane side. The chain crosses the membrane as a helical span at residues 214 to 233 (PCHFVSAFGAGFCATVVASP). Topologically, residues 234–267 (VDVVKTRYMNAPPGRYRSPLHCMLRMVAQEGPTA) are mitochondrial matrix. Residues 268–290 (FYKGFMPSFLRLGSWNVMMFVTY) form a helical membrane-spanning segment. Positions 275–297 (SFLRLGSWNVMMFVTYEQLKRAL) are purine nucleotide binding. Over 291–308 (EQLKRALMKVQVLRESPF) the chain is Mitochondrial intermembrane.

It belongs to the mitochondrial carrier (TC 2.A.29) family. As to quaternary structure, interacts with HAX1; the interaction is direct and calcium-dependent.

Its subcellular location is the mitochondrion inner membrane. Functionally, putative transmembrane transporter that plays a role in mitochondrial metabolism via an as yet unclear mechanism. Originally, this mitochondrial protein was thought to act as a proton transmembrane transporter from the mitochondrial intermembrane space into the matrix, causing proton leaks through the inner mitochondrial membrane, thereby uncoupling mitochondrial membrane potential generation from ATP synthesis. However, this function is controversial and uncoupling may not be the function, or at least not the main function, but rather a consequence of more conventional metabolite transporter activity. The polypeptide is Putative mitochondrial transporter UCP3 (Rattus norvegicus (Rat)).